Consider the following 301-residue polypeptide: Putative dynamin-related protein 4A (301 aa).

One can recognise a Dynamin-type G domain in the interval 59–301; sequence GIQLPTIVVV…LIDGDIVGIL (243 aa). The tract at residues 69–76 is G1 motif; it reads GDQSSGKS. 69–76 contributes to the GTP binding site; that stretch reads GDQSSGKS. A G2 motif region spans residues 94–96; that stretch reads CTR. Residues 168 to 171 form a G3 motif region; it reads DLPG. GTP-binding positions include 168–172 and 237–240; these read DLPGI and TKAD. The segment at 237–240 is G4 motif; it reads TKAD. A region of interest (G5 motif) is located at residue Glu-270.

It belongs to the TRAFAC class dynamin-like GTPase superfamily. Dynamin/Fzo/YdjA family.

This Arabidopsis thaliana (Mouse-ear cress) protein is Putative dynamin-related protein 4A (DRP4A).